The chain runs to 384 residues: L-type lectin-like domain-containing protein C4F6.05c (384 aa).

The signal sequence occupies residues 1–19; sequence MKFCSLFHVLSFCCTLAYA. The L-type lectin-like domain occupies 20–224; it reads VPKSQFLQLH…DLVALSNLNI (205 aa). Residues 20-353 are Extracellular-facing; that stretch reads VPKSQFLQLH…AMGNAYSPYN (334 aa). The interval 227–251 is disordered; it reads PDTSNNENLNPTSNTKQSVGDNTSP. The chain crosses the membrane as a helical span at residues 354–374; the sequence is LTNFMVFLLLGAIVSYGIMLV. Over 375 to 384 the chain is Cytoplasmic; the sequence is RRDRRRHKYL.

The protein resides in the membrane. It is found in the endoplasmic reticulum. Its subcellular location is the golgi apparatus. The sequence is that of L-type lectin-like domain-containing protein C4F6.05c from Schizosaccharomyces pombe (strain 972 / ATCC 24843) (Fission yeast).